The sequence spans 341 residues: Fructose-1,6-bisphosphatase, cytosolic (341 aa).

Mg(2+) contacts are provided by E71, E100, D121, L123, and D124. Substrate-binding positions include 124-127 (DGSS), N215, Y247, Y267, and K277. E283 provides a ligand contact to Mg(2+).

The protein belongs to the FBPase class 1 family. Requires Mg(2+) as cofactor.

The protein resides in the cytoplasm. The catalysed reaction is beta-D-fructose 1,6-bisphosphate + H2O = beta-D-fructose 6-phosphate + phosphate. This is Fructose-1,6-bisphosphatase, cytosolic from Spinacia oleracea (Spinach).